The primary structure comprises 273 residues: MEAVSPIRRFTVDGVNVYYEHYQNPGRQTLVCVHGFLSSAFSFRKVIPLLRDKYDIIALDLPPFGQSEKSRTFIYTYQNLAKLVIGILEHLQVKQAVLVGHSMGGQISLSAALQKPELFSKVVLLCSSGYLKRSHPTIIFGTHIPYFHLYIKRWLSKEGVMKNLLNVVHDKSLIDEEMIDGYGRPFQDEQIFKAMTRFIRHREGDLEPEQLKKMNKPALLIWGEEDRIVPMEIGKRLHADLPNSVLYSLGQTGHLVPEERPELISEHIADFIK.

Positions 29-131 (TLVCVHGFLS…VVLLCSSGYL (103 aa)) constitute an AB hydrolase-1 domain. Catalysis depends on residues Ser-102 and His-254.

It belongs to the DmpD/TodF/XylF esterase family.

This is an uncharacterized protein from Bacillus subtilis (strain 168).